We begin with the raw amino-acid sequence, 213 residues long: 3-isopropylmalate dehydratase small subunit (213 aa).

Belongs to the LeuD family. LeuD type 1 subfamily. Heterodimer of LeuC and LeuD.

It carries out the reaction (2R,3S)-3-isopropylmalate = (2S)-2-isopropylmalate. Its pathway is amino-acid biosynthesis; L-leucine biosynthesis; L-leucine from 3-methyl-2-oxobutanoate: step 2/4. In terms of biological role, catalyzes the isomerization between 2-isopropylmalate and 3-isopropylmalate, via the formation of 2-isopropylmaleate. In Neisseria meningitidis serogroup B (strain ATCC BAA-335 / MC58), this protein is 3-isopropylmalate dehydratase small subunit.